The primary structure comprises 328 residues: Arabinose 5-phosphate isomerase KdsD (328 aa).

The SIS domain maps to 42–184 (CEKMFWCKGK…AVALLKARGF (143 aa)). Residues 75 to 76 (GT), H82, H88, 114 to 123 (ALIPVLKRLH), 148 to 150 (KVA), T222, and D275 contribute to the substrate site. Zn(2+) is bound at residue H82. The CBS 1 domain maps to 210-268 (MHTGDEIPHVKKTASLRDALLEVTRKNLGMTVICDDNMMIEGIFTDGDLRRVFDMGVDV). In terms of domain architecture, CBS 2 spans 277-328 (MTPGGIRVRPGILAVEALNLMQSRHITSVMVADGDHLLGVLHMHDLLRAGVV).

It belongs to the SIS family. GutQ/KpsF subfamily. In terms of assembly, homotetramer.

The enzyme catalyses D-arabinose 5-phosphate = D-ribulose 5-phosphate. It functions in the pathway carbohydrate biosynthesis; 3-deoxy-D-manno-octulosonate biosynthesis; 3-deoxy-D-manno-octulosonate from D-ribulose 5-phosphate: step 1/3. Its pathway is bacterial outer membrane biogenesis; lipopolysaccharide biosynthesis. Its function is as follows. Involved in the biosynthesis of 3-deoxy-D-manno-octulosonate (KDO), a unique 8-carbon sugar component of lipopolysaccharides (LPSs). Catalyzes the reversible aldol-ketol isomerization between D-ribulose 5-phosphate (Ru5P) and D-arabinose 5-phosphate (A5P). In Shigella flexneri, this protein is Arabinose 5-phosphate isomerase KdsD (kdsD).